The following is a 357-amino-acid chain: Glutamate 5-kinase (357 aa).

Lys-7 is an ATP binding site. Residues Ser-43, Asp-130, and Asn-142 each contribute to the substrate site. Residues 162–163 (TD) and 205–211 (TGGMTTK) each bind ATP. In terms of domain architecture, PUA spans 270 to 353 (EGELQLDAGA…PVVVHRDGLV (84 aa)).

The protein belongs to the glutamate 5-kinase family.

The protein resides in the cytoplasm. The catalysed reaction is L-glutamate + ATP = L-glutamyl 5-phosphate + ADP. It functions in the pathway amino-acid biosynthesis; L-proline biosynthesis; L-glutamate 5-semialdehyde from L-glutamate: step 1/2. In terms of biological role, catalyzes the transfer of a phosphate group to glutamate to form L-glutamate 5-phosphate. This chain is Glutamate 5-kinase, found in Synechococcus sp. (strain CC9605).